A 64-amino-acid chain; its full sequence is Ferredoxin-like protein in nif region (64 aa).

The 4Fe-4S ferredoxin-type domain occupies 2-30; sequence AFKIIASQCTQCGACEFECPSGAISFKTD. Residues cysteine 10, cysteine 13, cysteine 16, cysteine 20, cysteine 39, cysteine 42, cysteine 51, and cysteine 55 each coordinate [4Fe-4S] cluster.

It depends on [4Fe-4S] cluster as a cofactor.

The polypeptide is Ferredoxin-like protein in nif region (fdxN) (Rhizobium leguminosarum bv. trifolii).